We begin with the raw amino-acid sequence, 911 residues long: Alpha-actinin-4 (911 aa).

An actin-binding region spans residues 1–269 (MVDYHAANQS…YVSSFYHAFS (269 aa)). A disordered region spans residues 8–31 (NQSYQYGPSSGSNGAGGGGTMGDY). An interaction with VCL region spans residues 12 to 26 (QYGPSSGSNGAGGGG). Tyr-31 is modified (phosphotyrosine). The interaction with VCL stretch occupies residues 40–61 (RDLLLDPAWEKQQRKTFTAWCN). 2 Calponin-homology (CH) domains span residues 50–154 (KQQR…LRFA) and 163–269 (TSAK…HAFS). The LXXLL motif signature appears at 84 to 88 (LMLLL). The segment at 108–126 (KINNVNKALDFIASKGVKL) is interaction with VCL. N6-acetyllysine is present on Lys-114. Residues 177 to 192 (TAPYKNVNVQNFHISW) are polyphosphoinositide (PIP2)-binding. Lys-214 carries the post-translational modification N6-acetyllysine. Position 249 is a phosphothreonine (Thr-249). 4 Spectrin repeats span residues 293 to 403 (HLME…WLLN), 413 to 518 (HLAE…ALEK), 528 to 639 (QLHL…ALLE), and 649 to 752 (HLRR…EVEN). N6-acetyllysine is present on residues Lys-592 and Lys-625. A Phosphoserine modification is found at Ser-696. The segment at 736–911 (WEQLLTTIAR…STALYGESDL (176 aa)) is mediates interaction with MICALL2. EF-hand domains follow at residues 765–800 (EQMQ…LGYD) and 806–841 (QGDA…ETTD). Asp-778 lines the Ca(2+) pocket. N6-acetyllysine is present on Lys-779. Ca(2+)-binding residues include Asp-780 and Glu-789. Lys-859 carries the post-translational modification N6-acetyllysine. Ser-909 is modified (phosphoserine).

The protein belongs to the alpha-actinin family. Homodimer; antiparallel. Identified in a IGF2BP1-dependent mRNP granule complex containing untranslated mRNAs. Component of the CART complex, at least composed of ACTN4, HGS/HRS, MYO5B and TRIM3. Binds TRIM3 at the N-terminus. Interacts with MAGI1. Interacts with PDLIM2. Identified in a complex with CASK, IQGAP1, MAGI2, NPHS1, SPTAN1 and SPTBN1. Interacts with MICALL2 (preferentially in opened conformation); stimulated by RAB13 activation. Interacts with PPARG and RARA. Binds to VCL; this interaction triggers VCL conformational changes. Interacts with SEPTIN14. Interacts with IGSF8.

It localises to the nucleus. The protein resides in the cytoplasm. It is found in the cell junction. Its subcellular location is the cytoskeleton. The protein localises to the stress fiber. It localises to the perinuclear region. Its function is as follows. F-actin cross-linking protein which is thought to anchor actin to a variety of intracellular structures. This is a bundling protein. Probably involved in vesicular trafficking via its association with the CART complex. The CART complex is necessary for efficient transferrin receptor recycling but not for EGFR degradation. Involved in tight junction assembly in epithelial cells probably through interaction with MICALL2. Links MICALL2 to the actin cytoskeleton and recruits it to the tight junctions. May also function as a transcriptional coactivator, stimulating transcription mediated by the nuclear hormone receptors PPARG and RARA. Association with IGSF8 regulates the immune synapse formation and is required for efficient T-cell activation. This is Alpha-actinin-4 from Bos taurus (Bovine).